The sequence spans 64 residues: DNA gyrase inhibitor YacG (64 aa).

Zn(2+)-binding residues include cysteine 9, cysteine 12, cysteine 28, and cysteine 32. Positions 45 to 64 (KRIPSSGDLSESDDWSEEQK) are disordered. Over residues 54–64 (SESDDWSEEQK) the composition is skewed to acidic residues.

Belongs to the DNA gyrase inhibitor YacG family. As to quaternary structure, interacts with GyrB. Zn(2+) serves as cofactor.

Functionally, inhibits all the catalytic activities of DNA gyrase by preventing its interaction with DNA. Acts by binding directly to the C-terminal domain of GyrB, which probably disrupts DNA binding by the gyrase. This chain is DNA gyrase inhibitor YacG, found in Citrobacter koseri (strain ATCC BAA-895 / CDC 4225-83 / SGSC4696).